Reading from the N-terminus, the 256-residue chain is Triosephosphate isomerase (256 aa).

10–12 (NWK) is a binding site for substrate. H97 (electrophile) is an active-site residue. E169 serves as the catalytic Proton acceptor. Residues G175, S214, and 235–236 (GG) each bind substrate.

The protein belongs to the triosephosphate isomerase family. Homodimer.

The protein resides in the cytoplasm. It catalyses the reaction D-glyceraldehyde 3-phosphate = dihydroxyacetone phosphate. It functions in the pathway carbohydrate biosynthesis; gluconeogenesis. It participates in carbohydrate degradation; glycolysis; D-glyceraldehyde 3-phosphate from glycerone phosphate: step 1/1. Involved in the gluconeogenesis. Catalyzes stereospecifically the conversion of dihydroxyacetone phosphate (DHAP) to D-glyceraldehyde-3-phosphate (G3P). This is Triosephosphate isomerase from Haemophilus ducreyi (strain 35000HP / ATCC 700724).